We begin with the raw amino-acid sequence, 607 residues long: Glutamine--fructose-6-phosphate aminotransferase [isomerizing] (607 aa).

The active-site Nucleophile; for GATase activity is the Cys-2. Residues 2–217 (CGIIGIIGND…DGDWAVLTRN (216 aa)) form the Glutamine amidotransferase type-2 domain. SIS domains lie at 283 to 422 (IGID…ARGA) and 455 to 597 (VCHD…VDQP). Lys-602 acts as the For Fru-6P isomerization activity in catalysis.

Homodimer.

Its subcellular location is the cytoplasm. The catalysed reaction is D-fructose 6-phosphate + L-glutamine = D-glucosamine 6-phosphate + L-glutamate. Its function is as follows. Catalyzes the first step in hexosamine metabolism, converting fructose-6P into glucosamine-6P using glutamine as a nitrogen source. The sequence is that of Glutamine--fructose-6-phosphate aminotransferase [isomerizing] from Brucella melitensis biotype 1 (strain ATCC 23456 / CCUG 17765 / NCTC 10094 / 16M).